The primary structure comprises 216 residues: MKFFADTAEIDAIQELAATGLLDGVTTNPSLIAKSGRDFKEVTREICAIVDGPVSAEVVALDHETMMKEAEILRKIADNVCIKVPLTIDGLKTCKKLTGDGTMVNVTLCFSATQALLAAKAGATFVSPFVGRHDDNGFDGMQLIADIRLIYDNYDFGTEILVASVRHGIHVLEAAKIGADVMTAPPAVIKGLFKHVLTEKGIEGFLADWAKTGQSI.

Lysine 83 (schiff-base intermediate with substrate) is an active-site residue.

Belongs to the transaldolase family. Type 3B subfamily.

The protein localises to the cytoplasm. The enzyme catalyses D-sedoheptulose 7-phosphate + D-glyceraldehyde 3-phosphate = D-erythrose 4-phosphate + beta-D-fructose 6-phosphate. It participates in carbohydrate degradation; pentose phosphate pathway; D-glyceraldehyde 3-phosphate and beta-D-fructose 6-phosphate from D-ribose 5-phosphate and D-xylulose 5-phosphate (non-oxidative stage): step 2/3. Functionally, transaldolase is important for the balance of metabolites in the pentose-phosphate pathway. This is Probable transaldolase from Sphingopyxis alaskensis (strain DSM 13593 / LMG 18877 / RB2256) (Sphingomonas alaskensis).